We begin with the raw amino-acid sequence, 349 residues long: Nuclear distribution protein nudE homolog 1-B (349 aa).

A coiled-coil region spans residues 22 to 189 (VAMKYKQCSE…ELAVQQKQEK (168 aa)).

The protein belongs to the nudE family. As to quaternary structure, self-associates. Interacts with pafah1b1. In terms of processing, phosphorylated in mitosis.

The protein resides in the cytoplasm. It localises to the cytoskeleton. Its subcellular location is the microtubule organizing center. The protein localises to the centrosome. It is found in the spindle. The protein resides in the chromosome. It localises to the centromere. Its subcellular location is the kinetochore. The protein localises to the cleavage furrow. It is found in the cytoplasmic vesicle membrane. In terms of biological role, required for centrosome duplication and formation and function of the mitotic spindle. The protein is Nuclear distribution protein nudE homolog 1-B (nde1-b) of Xenopus laevis (African clawed frog).